A 434-amino-acid chain; its full sequence is L-2-hydroxyglutarate dehydrogenase, mitochondrial (434 aa).

This sequence belongs to the L2HGDH family. Requires FAD as cofactor.

The protein resides in the mitochondrion. It carries out the reaction (S)-2-hydroxyglutarate + A = 2-oxoglutarate + AH2. The chain is L-2-hydroxyglutarate dehydrogenase, mitochondrial from Caenorhabditis briggsae.